A 495-amino-acid polypeptide reads, in one-letter code: Cobyric acid synthase (495 aa).

One can recognise a GATase cobBQ-type domain in the interval 250 to 444; it reads SLKISILRLP…LHGLFDNGAW (195 aa). The Nucleophile role is filled by C331. H436 is a catalytic residue.

It belongs to the CobB/CobQ family. CobQ subfamily.

Its pathway is cofactor biosynthesis; adenosylcobalamin biosynthesis. Functionally, catalyzes amidations at positions B, D, E, and G on adenosylcobyrinic A,C-diamide. NH(2) groups are provided by glutamine, and one molecule of ATP is hydrogenolyzed for each amidation. In Rippkaea orientalis (strain PCC 8801 / RF-1) (Cyanothece sp. (strain PCC 8801)), this protein is Cobyric acid synthase.